Here is a 308-residue protein sequence, read N- to C-terminus: Olfactory receptor 2D2 (308 aa).

Residues 1–25 (MRQINQTQVTEFLLLGLSDGPHTEQ) lie on the Extracellular side of the membrane. N-linked (GlcNAc...) asparagine glycosylation occurs at Asn5. A helical membrane pass occupies residues 26 to 49 (LLFIVLLGVYLVTVLGNLLLISLV). The Cytoplasmic portion of the chain corresponds to 50–57 (HVDSQLHT). The chain crosses the membrane as a helical span at residues 58-79 (PMYFFLCNLSLADLCFSTNIVP). The Extracellular segment spans residues 80–100 (QALVHLLSRKKVIAFTLCAAR). A helical membrane pass occupies residues 101–120 (LLFFLIFGCTQCALLAVMSY). Residues 121-139 (DRYVAICNPLRYPNIMTWK) lie on the Cytoplasmic side of the membrane. A helical transmembrane segment spans residues 140 to 158 (VCVQLATGSWTSGILVSVV). Topologically, residues 159–195 (DTTFILRLPYRGSNSIAHFFCEAPALLILASTDTHAS) are extracellular. Residues 196–219 (EMAIFLMGVVILLIPVFLILVSYG) traverse the membrane as a helical segment. Residues 220 to 236 (RIIVTVVKMKSTVGSLK) are Cytoplasmic-facing. The helical transmembrane segment at 237–259 (AFSTCGSHLMVVILFYGSAIITY) threads the bilayer. The Extracellular portion of the chain corresponds to 260–270 (MTPKSSKQQEK). Residues 271-290 (SVSVFYAIVTPMLNPLIYSL) traverse the membrane as a helical segment. The Cytoplasmic segment spans residues 291-308 (RNKDVKAALRKVATRNFP).

Belongs to the G-protein coupled receptor 1 family.

It localises to the cell membrane. In terms of biological role, odorant receptor. In Homo sapiens (Human), this protein is Olfactory receptor 2D2 (OR2D2).